Reading from the N-terminus, the 636-residue chain is Sodium-dependent nutrient amino acid transporter 1 (636 aa).

Residues 1–40 are disordered; it reads MELKTMPQNGANNGNPQGNTSNNNNTNDSSNSNSNNNNKT. The Cytoplasmic portion of the chain corresponds to 1–50; sequence MELKTMPQNGANNGNPQGNTSNNNNTNDSSNSNSNNNNKTERTNWSNGLE. A compositionally biased stretch (low complexity) spans 7 to 40; it reads PQNGANNGNPQGNTSNNNNTNDSSNSNSNNNNKT. 3 consecutive transmembrane segments (helical) span residues 51–71, 78–98, and 131–151; these read FLMSCISVSVGLGNIWRFPFT, GAFLIPYIIVLFMIGKPMYYL, and TICIISYYSSLLALTLYYLAV. An N-linked (GlcNAc...) asparagine glycan is attached at N184. A run of 9 helical transmembrane segments spans residues 225 to 245, 254 to 274, 303 to 323, 337 to 357, 397 to 417, 436 to 456, 469 to 489, 511 to 531, and 547 to 567; these read PDWKLTIALFVSWIVIFLVIM, AAYFLALFPYVVLFTLLGRAV, AVVQCFFSLAVGSGPIIMFSS, IVTTLDTLTSLLGGITIFAIL, LFSALFFFMLFVLGIGSIVAL, VALVTSICGFLMGLVYVTPGG, TYVVFILAIFELVGIAWIYGV, CWLIFTPIMMIVIFIYSMVTI, and VAGWLLFAIGASQFPLWGWWY.

This sequence belongs to the sodium:neurotransmitter symporter (SNF) (TC 2.A.22) family.

Its subcellular location is the membrane. In terms of biological role, unusual broad substrate spectrum amino acid:sodium cotransporter that promotes absorption of the D isomers of essential amino acids. Neutral amino acids are the preferred substrates, especially methionine and phenylalanine. This Drosophila grimshawi (Hawaiian fruit fly) protein is Sodium-dependent nutrient amino acid transporter 1.